Consider the following 266-residue polypeptide: Type III pantothenate kinase (266 aa).

6–13 (DAGNTNIV) contributes to the ATP binding site. 107–110 (GADR) lines the substrate pocket. Asp109 functions as the Proton acceptor in the catalytic mechanism. Asp129 provides a ligand contact to K(+). Thr132 lines the ATP pocket. Thr184 contacts substrate.

It belongs to the type III pantothenate kinase family. In terms of assembly, homodimer. The cofactor is NH4(+). K(+) is required as a cofactor.

Its subcellular location is the cytoplasm. It catalyses the reaction (R)-pantothenate + ATP = (R)-4'-phosphopantothenate + ADP + H(+). It participates in cofactor biosynthesis; coenzyme A biosynthesis; CoA from (R)-pantothenate: step 1/5. Catalyzes the phosphorylation of pantothenate (Pan), the first step in CoA biosynthesis. The protein is Type III pantothenate kinase of Acidiphilium cryptum (strain JF-5).